Reading from the N-terminus, the 245-residue chain is 1-(5-phosphoribosyl)-5-[(5-phosphoribosylamino)methylideneamino] imidazole-4-carboxamide isomerase (245 aa).

The active-site Proton acceptor is D11. D132 functions as the Proton donor in the catalytic mechanism.

Belongs to the HisA/HisF family.

The protein resides in the cytoplasm. It catalyses the reaction 1-(5-phospho-beta-D-ribosyl)-5-[(5-phospho-beta-D-ribosylamino)methylideneamino]imidazole-4-carboxamide = 5-[(5-phospho-1-deoxy-D-ribulos-1-ylimino)methylamino]-1-(5-phospho-beta-D-ribosyl)imidazole-4-carboxamide. It functions in the pathway amino-acid biosynthesis; L-histidine biosynthesis; L-histidine from 5-phospho-alpha-D-ribose 1-diphosphate: step 4/9. The chain is 1-(5-phosphoribosyl)-5-[(5-phosphoribosylamino)methylideneamino] imidazole-4-carboxamide isomerase from Geobacillus kaustophilus (strain HTA426).